Reading from the N-terminus, the 341-residue chain is Anthranilate phosphoribosyltransferase (341 aa).

5-phospho-alpha-D-ribose 1-diphosphate-binding positions include G84, 87–88 (GD), T92, 94–97 (NIST), 112–120 (KHGNRSVSS), and S124. G84 is a binding site for anthranilate. S96 provides a ligand contact to Mg(2+). N115 is a binding site for anthranilate. Residue R170 coordinates anthranilate. 2 residues coordinate Mg(2+): D229 and E230.

Belongs to the anthranilate phosphoribosyltransferase family. Homodimer. The cofactor is Mg(2+).

It carries out the reaction N-(5-phospho-beta-D-ribosyl)anthranilate + diphosphate = 5-phospho-alpha-D-ribose 1-diphosphate + anthranilate. It participates in amino-acid biosynthesis; L-tryptophan biosynthesis; L-tryptophan from chorismate: step 2/5. Catalyzes the transfer of the phosphoribosyl group of 5-phosphorylribose-1-pyrophosphate (PRPP) to anthranilate to yield N-(5'-phosphoribosyl)-anthranilate (PRA). The sequence is that of Anthranilate phosphoribosyltransferase from Polynucleobacter asymbioticus (strain DSM 18221 / CIP 109841 / QLW-P1DMWA-1) (Polynucleobacter necessarius subsp. asymbioticus).